Consider the following 37-residue polypeptide: Large ribosomal subunit protein bL36c (37 aa).

It belongs to the bacterial ribosomal protein bL36 family.

Its subcellular location is the plastid. It is found in the chloroplast. The protein is Large ribosomal subunit protein bL36c of Mesembryanthemum crystallinum (Common ice plant).